We begin with the raw amino-acid sequence, 917 residues long: Isoleucine--tRNA ligase (917 aa).

The 'HIGH' region signature appears at 57–67 (PYANGNLHMGH). Glu-554 contacts L-isoleucyl-5'-AMP. The short motif at 595-599 (KMSKS) is the 'KMSKS' region element. An ATP-binding site is contributed by Lys-598. 4 residues coordinate Zn(2+): Cys-886, Cys-889, Cys-906, and Cys-909.

It belongs to the class-I aminoacyl-tRNA synthetase family. IleS type 1 subfamily. Monomer. Zn(2+) serves as cofactor.

It is found in the cytoplasm. It catalyses the reaction tRNA(Ile) + L-isoleucine + ATP = L-isoleucyl-tRNA(Ile) + AMP + diphosphate. In terms of biological role, catalyzes the attachment of isoleucine to tRNA(Ile). As IleRS can inadvertently accommodate and process structurally similar amino acids such as valine, to avoid such errors it has two additional distinct tRNA(Ile)-dependent editing activities. One activity is designated as 'pretransfer' editing and involves the hydrolysis of activated Val-AMP. The other activity is designated 'posttransfer' editing and involves deacylation of mischarged Val-tRNA(Ile). In Staphylococcus aureus (strain Mu3 / ATCC 700698), this protein is Isoleucine--tRNA ligase.